A 535-amino-acid chain; its full sequence is Keratin, type II cytoskeletal 79 (535 aa).

Polar residues predominate over residues 1 to 12 (MRSSVSRQTYST). The segment at 1–52 (MRSSVSRQTYSTKGGFSSNSASGGSGSQARTSFSSVTVSRSSGSGGGAHCGP) is disordered. The interval 1–141 (MRSSVSRQTY…DPEIQRVRTQ (141 aa)) is head. The segment covering 32 to 42 (SFSSVTVSRSS) has biased composition (low complexity). The segment covering 43-52 (GSGGGAHCGP) has biased composition (gly residues). A coil 1A region spans residues 142 to 177 (EREQIKTLNNKFASFIDKVRFLEQQNKVLETKWALL). Residues 142-457 (EREQIKTLNN…KLLESEESRM (316 aa)) form the IF rod domain. Residues 178–198 (QEQGQNLGVTRNNLEPLFEAY) are linker 1. The coil 1B stretch occupies residues 199–290 (LGSMRSTLDR…QLYEMELSQV (92 aa)). The linker 12 stretch occupies residues 291 to 314 (QTHVSNTNVVLSMDNNRNLDLDSI). Positions 315–453 (IAEVKAQYEL…ATYRKLLESE (139 aa)) are coil 2. Positions 454–535 (ESRMSGECPS…TTVKTSSQRY (82 aa)) are tail.

The protein belongs to the intermediate filament family. In terms of assembly, heterotetramer of two type I and two type II keratins. Expressed in skeletal muscle, skin and scalp, but not in any other tissues or organs examined.

The polypeptide is Keratin, type II cytoskeletal 79 (KRT79) (Homo sapiens (Human)).